Reading from the N-terminus, the 323-residue chain is Beta-ketoacyl-[acyl-carrier-protein] synthase III (323 aa).

Active-site residues include Cys-112 and His-248. Positions 249-253 are ACP-binding; the sequence is QANRR. Residue Asn-278 is part of the active site.

Belongs to the thiolase-like superfamily. FabH family. In terms of assembly, homodimer.

Its subcellular location is the cytoplasm. The catalysed reaction is malonyl-[ACP] + acetyl-CoA + H(+) = 3-oxobutanoyl-[ACP] + CO2 + CoA. It functions in the pathway lipid metabolism; fatty acid biosynthesis. In terms of biological role, catalyzes the condensation reaction of fatty acid synthesis by the addition to an acyl acceptor of two carbons from malonyl-ACP. Catalyzes the first condensation reaction which initiates fatty acid synthesis and may therefore play a role in governing the total rate of fatty acid production. Possesses both acetoacetyl-ACP synthase and acetyl transacylase activities. Its substrate specificity determines the biosynthesis of branched-chain and/or straight-chain of fatty acids. In Streptococcus agalactiae serotype Ia (strain ATCC 27591 / A909 / CDC SS700), this protein is Beta-ketoacyl-[acyl-carrier-protein] synthase III.